The primary structure comprises 284 residues: Proteasome subunit beta 1 (284 aa).

Residues 1–54 (MAQRDTGGRLGAEFFTPGDSSFTAFLAAHRPALLSTRGLLPDGVRAAPDRVPHG) constitute a propeptide, removed in mature form; by autocatalysis. Catalysis depends on threonine 55, which acts as the Nucleophile. Over residues 256–277 (RLPESETEDLSREMVEQRHTRP) the composition is skewed to basic and acidic residues. A disordered region spans residues 256–284 (RLPESETEDLSREMVEQRHTRPDGPTAAM).

This sequence belongs to the peptidase T1B family. The 20S proteasome core is composed of 14 alpha and 14 beta subunits that assemble into four stacked heptameric rings, resulting in a barrel-shaped structure. The two inner rings, each composed of seven catalytic beta subunits, are sandwiched by two outer rings, each composed of seven alpha subunits. The catalytic chamber with the active sites is on the inside of the barrel. Has a gated structure, the ends of the cylinder being occluded by the N-termini of the alpha-subunits. Is capped by the proteasome-associated ATPase, ARC.

It localises to the cytoplasm. The catalysed reaction is Cleavage of peptide bonds with very broad specificity.. It functions in the pathway protein degradation; proteasomal Pup-dependent pathway. Its activity is regulated as follows. The formation of the proteasomal ATPase ARC-20S proteasome complex, likely via the docking of the C-termini of ARC into the intersubunit pockets in the alpha-rings, may trigger opening of the gate for substrate entry. Interconversion between the open-gate and close-gate conformations leads to a dynamic regulation of the 20S proteasome proteolysis activity. In terms of biological role, component of the proteasome core, a large protease complex with broad specificity involved in protein degradation. In Streptomyces avermitilis (strain ATCC 31267 / DSM 46492 / JCM 5070 / NBRC 14893 / NCIMB 12804 / NRRL 8165 / MA-4680), this protein is Proteasome subunit beta 1.